We begin with the raw amino-acid sequence, 358 residues long: Cinnamyl alcohol dehydrogenase 1 (358 aa).

Residues 21-349 (GILTPYTYTL…KNDVRYRFVV (329 aa)) form the Enoyl reductase (ER) domain. C48 contacts Zn(2+). Residue S50 participates in NADP(+) binding. Positions 70, 71, 101, 104, 107, 115, and 164 each coordinate Zn(2+). NADP(+) contacts are provided by residues T168, 189 to 194 (GLGGVG), 212 to 217 (SSSDKK), T252, G276, and 299 to 301 (SFV).

Belongs to the zinc-containing alcohol dehydrogenase family. Homodimer. Zn(2+) is required as a cofactor.

The enzyme catalyses (E)-cinnamyl alcohol + NADP(+) = (E)-cinnamaldehyde + NADPH + H(+). The catalysed reaction is (E)-coniferol + NADP(+) = (E)-coniferaldehyde + NADPH + H(+). It catalyses the reaction (E)-sinapyl alcohol + NADP(+) = (E)-sinapaldehyde + NADPH + H(+). It carries out the reaction (E)-4-coumaroyl alcohol + NADP(+) = (E)-4-coumaraldehyde + NADPH + H(+). It functions in the pathway aromatic compound metabolism; phenylpropanoid biosynthesis. Functionally, involved in lignin biosynthesis. Catalyzes the final step specific for the production of lignin monomers. Catalyzes the NADPH-dependent reduction of coniferaldehyde, 5-hydroxyconiferaldehyde, sinapaldehyde, 4-coumaraldehyde and caffeyl aldehyde to their respective alcohols. Can use coumaraldehyde and, with a lower efficiency, coniferaldehyde and sinapaldehyde as substrates. In Medicago truncatula (Barrel medic), this protein is Cinnamyl alcohol dehydrogenase 1.